The following is a 198-amino-acid chain: Beta-crystallin A1 (198 aa).

Residues 1–13 (MLYLVLFLVPFNS) form an N-terminal arm region. Beta/gamma crystallin 'Greek key' domains lie at 14–53 (IQIT…KVEC) and 54–100 (GAWI…RPIC). S-glutathionyl cysteine; alternate is present on residues Cys65 and Cys100. Residues Cys65 and Cys100 each carry the S-methylcysteine; alternate modification. Residues 101–106 (SANHKE) are connecting peptide. 2 consecutive Beta/gamma crystallin 'Greek key' domains span residues 107–148 (SKIT…KIQC) and 149–197 (GAWV…RRIQ).

The protein belongs to the beta/gamma-crystallin family. In terms of assembly, homo/heterodimer, or complexes of higher-order. The structure of beta-crystallin oligomers seems to be stabilized through interactions between the N-terminal arms. Interacts with CRYBA1.

Functionally, crystallins are the dominant structural components of the vertebrate eye lens. The chain is Beta-crystallin A1 from Mus musculus (Mouse).